Reading from the N-terminus, the 539-residue chain is GMP synthase [glutamine-hydrolyzing] (539 aa).

The 200-residue stretch at 4 to 203 (KILILDFGSQ…VHDICGCKSD (200 aa)) folds into the Glutamine amidotransferase type-1 domain. Cysteine 82 serves as the catalytic Nucleophile. Active-site residues include histidine 177 and glutamate 179. The region spanning 204–395 (WNMPDYIAEA…LGLPHDMVYR (192 aa)) is the GMPS ATP-PPase domain. 231–237 (SGGVDSS) provides a ligand contact to ATP.

As to quaternary structure, homodimer.

It carries out the reaction XMP + L-glutamine + ATP + H2O = GMP + L-glutamate + AMP + diphosphate + 2 H(+). It functions in the pathway purine metabolism; GMP biosynthesis; GMP from XMP (L-Gln route): step 1/1. In terms of biological role, catalyzes the synthesis of GMP from XMP. This chain is GMP synthase [glutamine-hydrolyzing], found in Janthinobacterium sp. (strain Marseille) (Minibacterium massiliensis).